The primary structure comprises 213 residues: Major fimbrial subunit (213 aa).

An N-terminal signal peptide occupies residues 1-20; it reads MKKTLLGSLILLAFAGNVQA. C41 and C81 are joined by a disulfide.

Belongs to the fimbrial protein family.

It localises to the fimbrium. Its function is as follows. Mediates adherence to oropharyngeal epithelial cells. Helps the airway colonization process. In Haemophilus influenzae, this protein is Major fimbrial subunit (hifA).